A 2371-amino-acid polypeptide reads, in one-letter code: Reducing polyketide synthase DEP5 (2371 aa).

Residues 47-477 (LEPIAVVGMG…GTNAHTIIES (431 aa)) enclose the Ketosynthase family 3 (KS3) domain. Residues cysteine 221, histidine 358, and histidine 399 each act as for beta-ketoacyl synthase activity in the active site. The malonyl-CoA:ACP transacylase (MAT) domain stretch occupies residues 593–905 (VFTGQGAQWA…QYLPTLIRGS (313 aa)). Serine 685 functions as the For malonyltransferase activity in the catalytic mechanism. The N-terminal hotdog fold stretch occupies residues 982–1120 (HDVLGQLTIG…GSIRINTSNK (139 aa)). Positions 982–1158 (HDVLGQLTIG…FNYGPTFQDM (177 aa)) are dehydratase (DH) domain. The PKS/mFAS DH domain occupies 982–1286 (HDVLGQLTIG…CTAYEAAIPQ (305 aa)). Histidine 1014 (proton acceptor; for dehydratase activity) is an active-site residue. The segment at 1132 to 1286 (PQRASGKLWN…CTAYEAAIPQ (155 aa)) is C-terminal hotdog fold. Aspartate 1195 (proton donor; for dehydratase activity) is an active-site residue. Positions 1656–1964 (GKVEAGKVVF…QSLSSTETVL (309 aa)) are enoyl reductase (ER) domain. A ketoreductase (KR) domain region spans residues 1988 to 2163 (ATYLLVGCLG…KHACAVVLPM (176 aa)). Residues 2286–2364 (SLVRDHFISK…KFAELVCAAQ (79 aa)) form the Carrier domain. Residue serine 2323 is modified to O-(pantetheine 4'-phosphoryl)serine.

Its pathway is polyketide biosynthesis. Its function is as follows. Part of the gene cluster that mediates the biosynthesis of depudecin, a highly oxidized eleven-carbon linear polyketide that acts as a histone deacetylase (HDAC) inhibitor and makes a small contribution to pathogenesis. The reducing polyketide synthase DEP5 is the central enzyme in depudecin biosynthesis by yielding the backbone polyketide chain. The monooxygenases DEP2 and DEP4, as well as the uncharacterized protein DEP1, then act as tailoring enzymes to modify the intermediate polyketide chain into depudecin. This chain is Reducing polyketide synthase DEP5, found in Fusarium langsethiae.